An 87-amino-acid chain; its full sequence is Small ribosomal subunit protein bS20 (87 aa).

A disordered region spans residues 1–26 (MANIKSAKKRAIQAEKARKHNASRRS).

Belongs to the bacterial ribosomal protein bS20 family.

Binds directly to 16S ribosomal RNA. The sequence is that of Small ribosomal subunit protein bS20 from Tolumonas auensis (strain DSM 9187 / NBRC 110442 / TA 4).